The primary structure comprises 92 residues: Ezrin (92 aa).

The region spanning 1–72 (QLFDQVVKGF…PDFVFYAPRR (72 aa)) is the FERM domain. The residue at position 15 (Lys15) is an N6-acetyllysine. The interaction with SCYL3 stretch occupies residues 42–92 (EIRNISFNDKKFVIKPIDKKAPDFVFYAPRRKPDTIEVQQMKLQDFEQKTK).

As to quaternary structure, interacts with PALS1 and NHERF2. Found in a complex with EZR, PODXL and NHERF2. Interacts with MCC, PLEKHG6, PODXL, SCYL3/PACE1, NHERF1 and TMEM8B. Interacts (when phosphorylated) with FES/FPS. Interacts with dimeric S100P, the interaction may be activating through unmasking of F-actin binding sites. Identified in complexes that contain VIM, EZR, AHNAK, BFSP1, BFSP2, ANK2, PLEC, PRX and spectrin. Detected in a complex composed of at least EZR, AHNAK, PPL and PRX. Interacts with PDPN (via cytoplasmic domain); activates RHOA and promotes epithelial-mesenchymal transition. Interacts with SPN/CD43 cytoplasmic tail, CD44 and ICAM2. Interacts with CLIC5; may work together in a complex which also includes RDX and MYO6 to stabilize linkages between the plasma membrane and subjacent actin cytoskeleton at the base of stereocilia. Phosphorylated by tyrosine-protein kinases. Phosphorylation by ROCK2 suppresses the head-to-tail association of the N-terminal and C-terminal halves resulting in an opened conformation which is capable of actin and membrane-binding. Post-translationally, S-nitrosylation is induced by interferon-gamma and oxidatively-modified low-densitity lipoprotein (LDL(ox)) possibly implicating the iNOS-S100A8/9 transnitrosylase complex.

The protein resides in the apical cell membrane. The protein localises to the cell projection. Its subcellular location is the microvillus membrane. It localises to the ruffle membrane. It is found in the cytoplasm. The protein resides in the cell cortex. The protein localises to the cytoskeleton. Its subcellular location is the microvillus. Its activity is regulated as follows. A head-to-tail association, of the N-terminal and C-terminal halves results in a closed conformation (inactive form) which is incapable of actin or membrane-binding. Functionally, probably involved in connections of major cytoskeletal structures to the plasma membrane. In epithelial cells, required for the formation of microvilli and membrane ruffles on the apical pole. Along with PLEKHG6, required for normal macropinocytosis. The polypeptide is Ezrin (Mesocricetus auratus (Golden hamster)).